We begin with the raw amino-acid sequence, 339 residues long: Ketol-acid reductoisomerase (NADP(+)) (339 aa).

A KARI N-terminal Rossmann domain is found at 1–182; the sequence is MRVYYDCDVN…GGGRSGIMKT (182 aa). NADP(+) contacts are provided by residues 24 to 27, S51, T53, and 83 to 86; these read YGAQ and DELQ. Residue H108 is part of the active site. G134 lines the NADP(+) pocket. Residues 183 to 328 form the KARI C-terminal knotted domain; it reads TFREECETDL…DKIRSMMALT (146 aa). D191, E195, E227, and E231 together coordinate Mg(2+). S252 contacts substrate.

Belongs to the ketol-acid reductoisomerase family. It depends on Mg(2+) as a cofactor.

The catalysed reaction is (2R)-2,3-dihydroxy-3-methylbutanoate + NADP(+) = (2S)-2-acetolactate + NADPH + H(+). It carries out the reaction (2R,3R)-2,3-dihydroxy-3-methylpentanoate + NADP(+) = (S)-2-ethyl-2-hydroxy-3-oxobutanoate + NADPH + H(+). Its pathway is amino-acid biosynthesis; L-isoleucine biosynthesis; L-isoleucine from 2-oxobutanoate: step 2/4. The protein operates within amino-acid biosynthesis; L-valine biosynthesis; L-valine from pyruvate: step 2/4. In terms of biological role, involved in the biosynthesis of branched-chain amino acids (BCAA). Catalyzes an alkyl-migration followed by a ketol-acid reduction of (S)-2-acetolactate (S2AL) to yield (R)-2,3-dihydroxy-isovalerate. In the isomerase reaction, S2AL is rearranged via a Mg-dependent methyl migration to produce 3-hydroxy-3-methyl-2-ketobutyrate (HMKB). In the reductase reaction, this 2-ketoacid undergoes a metal-dependent reduction by NADPH to yield (R)-2,3-dihydroxy-isovalerate. This is Ketol-acid reductoisomerase (NADP(+)) from Bartonella bacilliformis (strain ATCC 35685 / KC583 / Herrer 020/F12,63).